Consider the following 252-residue polypeptide: Ubiquinone/menaquinone biosynthesis C-methyltransferase UbiE (252 aa).

S-adenosyl-L-methionine-binding positions include Thr-71, Asp-100, 124-125 (DA), and Ser-141.

This sequence belongs to the class I-like SAM-binding methyltransferase superfamily. MenG/UbiE family.

The catalysed reaction is a 2-demethylmenaquinol + S-adenosyl-L-methionine = a menaquinol + S-adenosyl-L-homocysteine + H(+). It catalyses the reaction a 2-methoxy-6-(all-trans-polyprenyl)benzene-1,4-diol + S-adenosyl-L-methionine = a 5-methoxy-2-methyl-3-(all-trans-polyprenyl)benzene-1,4-diol + S-adenosyl-L-homocysteine + H(+). It functions in the pathway quinol/quinone metabolism; menaquinone biosynthesis; menaquinol from 1,4-dihydroxy-2-naphthoate: step 2/2. The protein operates within cofactor biosynthesis; ubiquinone biosynthesis. Methyltransferase required for the conversion of demethylmenaquinol (DMKH2) to menaquinol (MKH2) and the conversion of 2-polyprenyl-6-methoxy-1,4-benzoquinol (DDMQH2) to 2-polyprenyl-3-methyl-6-methoxy-1,4-benzoquinol (DMQH2). This is Ubiquinone/menaquinone biosynthesis C-methyltransferase UbiE from Caulobacter sp. (strain K31).